A 100-amino-acid polypeptide reads, in one-letter code: Large ribosomal subunit protein uL23 (100 aa).

It belongs to the universal ribosomal protein uL23 family. As to quaternary structure, part of the 50S ribosomal subunit. Contacts protein L29, and trigger factor when it is bound to the ribosome.

Functionally, one of the early assembly proteins it binds 23S rRNA. One of the proteins that surrounds the polypeptide exit tunnel on the outside of the ribosome. Forms the main docking site for trigger factor binding to the ribosome. The protein is Large ribosomal subunit protein uL23 of Prochlorococcus marinus subsp. pastoris (strain CCMP1986 / NIES-2087 / MED4).